Here is an 804-residue protein sequence, read N- to C-terminus: G-type lectin S-receptor-like serine/threonine-protein kinase At1g61500 (804 aa).

An N-terminal signal peptide occupies residues 1–24; that stretch reads MMTRFACLHLFTMFLFTLLSGSSS. Residues 25–145 enclose the Bulb-type lectin domain; sequence AVITTESPLS…VSERALWQSF (121 aa). Residues 25 to 427 are Extracellular-facing; sequence AVITTESPLS…ELDGNKRKKT (403 aa). Residues asparagine 54, asparagine 135, and asparagine 237 are each glycosylated (N-linked (GlcNAc...) asparagine). The EGF-like; atypical domain maps to 279 to 315; that stretch reads PKKLCDFYGACGPFGLCVMSPSPMCKCFRGFVPKSVE. Disulfide bonds link cysteine 283-cysteine 295 and cysteine 289-cysteine 303. Residues asparagine 321, asparagine 337, and asparagine 376 are each glycosylated (N-linked (GlcNAc...) asparagine). Residues 334 to 416 enclose the PAN domain; the sequence is CLGNSTGEDA…GELLSIRLAR (83 aa). 2 disulfide bridges follow: cysteine 369-cysteine 390 and cysteine 373-cysteine 379. A helical transmembrane segment spans residues 428 to 448; the sequence is IVASIVSLTLFMILGFTAFGV. Over 449-804 the chain is Cytoplasmic; sequence WRCRVEHIAH…GMTQSVILGR (356 aa). The Protein kinase domain occupies 491–776; the sequence is FSLSNKLGQG…DLPSPKQPTF (286 aa). Residues 497-505 and lysine 519 contribute to the ATP site; that span reads LGQGGFGSV. Phosphoserine is present on residues serine 525 and serine 540. The interval 580 to 597 is caM-binding; it reads RKRLEIDWPKRFDIIQGI. The Proton acceptor role is filled by aspartate 616. Phosphoserine occurs at positions 620 and 633. Phosphothreonine is present on threonine 650. Serine 693 and serine 787 each carry phosphoserine.

Belongs to the protein kinase superfamily. Ser/Thr protein kinase family.

The protein resides in the cell membrane. The catalysed reaction is L-seryl-[protein] + ATP = O-phospho-L-seryl-[protein] + ADP + H(+). It catalyses the reaction L-threonyl-[protein] + ATP = O-phospho-L-threonyl-[protein] + ADP + H(+). The polypeptide is G-type lectin S-receptor-like serine/threonine-protein kinase At1g61500 (Arabidopsis thaliana (Mouse-ear cress)).